Here is a 128-residue protein sequence, read N- to C-terminus: Small ribosomal subunit protein uS11 (128 aa).

The protein belongs to the universal ribosomal protein uS11 family. In terms of assembly, part of the 30S ribosomal subunit. Interacts with proteins S7 and S18. Binds to IF-3.

Its function is as follows. Located on the platform of the 30S subunit, it bridges several disparate RNA helices of the 16S rRNA. Forms part of the Shine-Dalgarno cleft in the 70S ribosome. The chain is Small ribosomal subunit protein uS11 from Desulfosudis oleivorans (strain DSM 6200 / JCM 39069 / Hxd3) (Desulfococcus oleovorans).